A 450-amino-acid polypeptide reads, in one-letter code: Glucose-6-phosphate isomerase (450 aa).

Thr-39 carries the post-translational modification Phosphothreonine. The Proton donor role is filled by Glu-291. Residues His-312 and Lys-426 contribute to the active site.

It belongs to the GPI family.

It is found in the cytoplasm. The catalysed reaction is alpha-D-glucose 6-phosphate = beta-D-fructose 6-phosphate. It participates in carbohydrate biosynthesis; gluconeogenesis. The protein operates within carbohydrate degradation; glycolysis; D-glyceraldehyde 3-phosphate and glycerone phosphate from D-glucose: step 2/4. Catalyzes the reversible isomerization of glucose-6-phosphate to fructose-6-phosphate. This Bacillus cereus (strain ATCC 10987 / NRS 248) protein is Glucose-6-phosphate isomerase.